A 661-amino-acid polypeptide reads, in one-letter code: Heme transporter BhuA (661 aa).

A signal peptide spans 1–23 (MKFTRTLVLASTSLLATVATSQA). Positions 48–159 (KDNIEATGGT…AAGAIRYETV (112 aa)) constitute a TBDR plug domain. One can recognise a TBDR beta-barrel domain in the interval 170-661 (TFGARIIGSY…TFTFQTAFKF (492 aa)).

Belongs to the TonB-dependent receptor family.

It is found in the cell outer membrane. Its function is as follows. Heme transporter. This Brucella abortus biovar 1 (strain 9-941) protein is Heme transporter BhuA (bhuA).